We begin with the raw amino-acid sequence, 502 residues long: MKESQVYLELNRSRQHDFLYPLIFREYIYALAYDHGLNKSMILLENEDYGNKFSSLIVKRLIIRMDQQNHLIISANDSNQNPFFGHNNNLYSQMISAGFAVIVEITFSLRLVSYSQGKEVAKSHNLQSIHSIFPFLEDKFSHLNYVLDVLIPHPIHLEILVQALRYWVKDASSLHLLRFSLYEYCNLKSFFTPKKSISIFNPRLFLFLYNSHVCEYESIFLFLRNQSSHLRSTSSGVFLERIYFYGKIEYLVEVFCNDFQNNLWLFKDPFIHFIRYQGKAILASKDTSLLMNKWKYYFVDLWQYYFYVWSQSGRVRINQLSKYSLDFLGYLSSVRLNPSVVRSQMLESSFIIDNAMKKLDTRIPIISLIGSLSKAKFCNTLGHPISKPTWXDSSDSDIIDRFVRICRNLSHYHSGSSKKKSLYRIKYILRLSCVKTLARKHKSTVRAFLKRLGSEFLEEFFMEEEQVFSLMFPRVFSTSRKLYRGRIWYLDIICINVLVNNE.

Belongs to the intron maturase 2 family. MatK subfamily.

The protein localises to the plastid. The protein resides in the chloroplast. Usually encoded in the trnK tRNA gene intron. Probably assists in splicing its own and other chloroplast group II introns. This is Maturase K from Theobroma cacao (Cacao).